We begin with the raw amino-acid sequence, 189 residues long: uncharacterized protein (189 aa).

Positions 1–19 (MKRVLFFLLMIFVSFGVIA) are cleaved as a signal peptide.

This is an uncharacterized protein from Escherichia coli (strain K12).